We begin with the raw amino-acid sequence, 361 residues long: Peptide chain release factor 1 (361 aa).

Gln238 carries the post-translational modification N5-methylglutamine.

It belongs to the prokaryotic/mitochondrial release factor family. Post-translationally, methylated by PrmC. Methylation increases the termination efficiency of RF1.

The protein localises to the cytoplasm. In terms of biological role, peptide chain release factor 1 directs the termination of translation in response to the peptide chain termination codons UAG and UAA. The polypeptide is Peptide chain release factor 1 (Mesomycoplasma hyopneumoniae (strain 7448) (Mycoplasma hyopneumoniae)).